We begin with the raw amino-acid sequence, 1764 residues long: Cilia- and flagella-associated protein 44 (1764 aa).

WD repeat units follow at residues 115–157 (GTER…IVLR), 160–199 (AFSQDVYGVAFSPYFEGQLTTSGQGHIRFWRMASTFTGLK), 208–248 (GNVE…VVLT), 255–294 (CHDGPIEALLLDRPAGRVLSAGADGRVRMWDFGAVNDAEP), 361–400 (HPAGAVAGLQLSARTHTALVASADGCLRALDYVSGAVLAE), 454–493 (AHKGAVAALAVSADGGRLVSAGEDGSVFFFDLTAQPQPGT), and 495–534 (VPGMPACGLLAPRAFIKLPSGSGTVTCGVWEAAEGGGVLL). Positions 570-654 (QLVVPKPKRP…GGPSSTTGEL (85 aa)) are disordered. Residues 575–584 (KPKRPKKKKG) show a composition bias toward basic residues. 2 stretches are compositionally biased toward basic and acidic residues: residues 585–596 (KNDGEEGDKEGG) and 604–628 (GEDKGGEQADGEGGSKEGGEEGRAA). Residues 629-641 (EEEEEEEADDEAD) are compositionally biased toward acidic residues. 3 WD repeats span residues 649-692 (STTG…PLAA), 707-752 (AHAG…LHDM), and 753-791 (QSGRVSGLGLSHDGAYLVTAAADGALHLLALALPPELAP). Residues 821–850 (YTLEEEKQQAERDQQVREAEEKKLSVRQRL) adopt a coiled-coil conformation. 2 disordered regions span residues 972 to 1003 (AAAGGEGGAGGRDTDARGKGSDTGGGPGGDAA) and 1426 to 1468 (KKKA…CPPG). Residues 1434-1462 (GEDDYDSEEDEEDEDMGDDEVDDDDDGGE) are compositionally biased toward acidic residues. Coiled-coil stretches lie at residues 1479–1517 (DLREKRLDEEDMIAEFTKTIEVLRKEKEALAKKQRLVEQ), 1567–1674 (LVFS…DAKI), and 1729–1758 (EERDALVALVNAQAAELDRLKGQLLALRRK).

It belongs to the CFAP44 family.

Its subcellular location is the cell projection. It localises to the cilium. The protein resides in the flagellum. It is found in the cytoplasm. The protein localises to the cytoskeleton. Its subcellular location is the flagellum axoneme. Functionally, flagellar protein involved in sperm flagellum axoneme organization and function. The sequence is that of Cilia- and flagella-associated protein 44 from Chlamydomonas reinhardtii (Chlamydomonas smithii).